The sequence spans 223 residues: Ribosomal RNA small subunit methyltransferase G (223 aa).

S-adenosyl-L-methionine contacts are provided by glycine 85, phenylalanine 90, and arginine 154.

It belongs to the methyltransferase superfamily. RNA methyltransferase RsmG family.

It localises to the cytoplasm. It catalyses the reaction guanosine(527) in 16S rRNA + S-adenosyl-L-methionine = N(7)-methylguanosine(527) in 16S rRNA + S-adenosyl-L-homocysteine. Its function is as follows. Specifically methylates the N7 position of guanine in position 527 of 16S rRNA. The sequence is that of Ribosomal RNA small subunit methyltransferase G from Rhodopseudomonas palustris (strain ATCC BAA-98 / CGA009).